Consider the following 324-residue polypeptide: Annexin A10 (324 aa).

4 Annexin repeats span residues 17–88 (FNPI…GLMY), 89–160 (PPPL…NLVQ), 171–243 (AMAA…AIVL), and 247–318 (DKPA…AICA).

Belongs to the annexin family.

In Homo sapiens (Human), this protein is Annexin A10 (ANXA10).